A 206-amino-acid chain; its full sequence is Homoserine/homoserine lactone efflux protein (206 aa).

Helical transmembrane passes span 5 to 25 (WWFA…SGAI), 45 to 65 (GLQT…GTLF), 68 to 88 (SLLA…WLGI), 117 to 137 (FVNL…PQFI), 148 to 168 (LILG…YATL), and 182 to 202 (MKAL…LLAS).

This sequence belongs to the Rht family.

Its subcellular location is the cell membrane. In terms of biological role, conducts the efflux of homoserine and homoserine lactone. In Salmonella typhimurium (strain LT2 / SGSC1412 / ATCC 700720), this protein is Homoserine/homoserine lactone efflux protein (rhtB).